Reading from the N-terminus, the 314-residue chain is Formate-nitrite transporter (314 aa).

Residues 1 to 47 lie on the Cytoplasmic side of the membrane; that stretch reads MQKSTSKYVIDPISIKTNCSSEESYIRCVEYGKGKAHYRNLILLAKA. Residues 48 to 68 traverse the membrane as a helical segment; that stretch reads ILAGVFVGVCAHASGIAGGLF. Residues 69-77 lie on the Extracellular side of the membrane; it reads YYHKLREYV. A helical transmembrane segment spans residues 78 to 98; it reads GISMSAFVYGFTFPIAFLCII. Residues 99–128 are Cytoplasmic-facing; it reads CTGSDLFTGNTLAVTTALLQKKLGLLCYMR. Residues 129-149 form a helical membrane-spanning segment; it reads VMCISLVGNYIGAVAFAFFVS. The Extracellular segment spans residues 150-185; the sequence is YGSGAFSINTDTSKNHIFQFLNDIAIKKVSHSFIEC. A helical transmembrane segment spans residues 186–206; the sequence is ICLAIGCNIFVCLAVYFVLSI. The Cytoplasmic portion of the chain corresponds to 207-211; sequence KDGSG. Residues 212–232 form a helical membrane-spanning segment; the sequence is LVFSVFFAVYAFAIAGYEHII. Over 233–260 the chain is Extracellular; the sequence is ANIYTLNLALMISNDISFTQVYFKNLLP. Residues 261–281 traverse the membrane as a helical segment; that stretch reads TLIGNYIAGGLVLAFPLFFIY. Residues 282 to 314 lie on the Cytoplasmic side of the membrane; the sequence is RSCYYDYDKMNDELNTVVLKTLSLELQNESNHI.

It belongs to the FNT transporter (TC 1.A.16) family. Homopentamer.

It localises to the cell membrane. The protein localises to the vacuole membrane. The enzyme catalyses (S)-lactate(in) + H(+)(in) = (S)-lactate(out) + H(+)(out). It carries out the reaction formate(in) + H(+)(in) = formate(out) + H(+)(out). It catalyses the reaction pyruvate(out) + H(+)(out) = pyruvate(in) + H(+)(in). The catalysed reaction is acetate(out) + H(+)(out) = acetate(in) + H(+)(in). With respect to regulation, inhibited by the Malaria Box compound MMV007839 and its derivatives BH296 and BH267.meta. Its function is as follows. Monocarboxylate-proton symporter that mediates the efflux of the waste product lactate in the intraerythrocytic parasites; active in acidic-to-neutral pH range. Transports L-lactate. This is Formate-nitrite transporter from Plasmodium malariae.